A 300-amino-acid polypeptide reads, in one-letter code: Ribosomal protein L11 methyltransferase (300 aa).

Positions 152, 173, 195, and 234 each coordinate S-adenosyl-L-methionine.

The protein belongs to the methyltransferase superfamily. PrmA family.

It is found in the cytoplasm. The catalysed reaction is L-lysyl-[protein] + 3 S-adenosyl-L-methionine = N(6),N(6),N(6)-trimethyl-L-lysyl-[protein] + 3 S-adenosyl-L-homocysteine + 3 H(+). Functionally, methylates ribosomal protein L11. The polypeptide is Ribosomal protein L11 methyltransferase (Paraburkholderia phytofirmans (strain DSM 17436 / LMG 22146 / PsJN) (Burkholderia phytofirmans)).